The chain runs to 441 residues: Histidine--tRNA ligase (441 aa).

This sequence belongs to the class-II aminoacyl-tRNA synthetase family. In terms of assembly, homodimer.

It is found in the cytoplasm. It catalyses the reaction tRNA(His) + L-histidine + ATP = L-histidyl-tRNA(His) + AMP + diphosphate + H(+). This chain is Histidine--tRNA ligase, found in Koribacter versatilis (strain Ellin345).